Here is a 165-residue protein sequence, read N- to C-terminus: ATP synthase subunit b (165 aa).

A helical membrane pass occupies residues 7-27 (GTSLGNLLIVTGSFILLLLLV).

The protein belongs to the ATPase B chain family. F-type ATPases have 2 components, F(1) - the catalytic core - and F(0) - the membrane proton channel. F(1) has five subunits: alpha(3), beta(3), gamma(1), delta(1), epsilon(1). F(0) has three main subunits: a(1), b(2) and c(10-14). The alpha and beta chains form an alternating ring which encloses part of the gamma chain. F(1) is attached to F(0) by a central stalk formed by the gamma and epsilon chains, while a peripheral stalk is formed by the delta and b chains.

Its subcellular location is the cell membrane. Its function is as follows. F(1)F(0) ATP synthase produces ATP from ADP in the presence of a proton or sodium gradient. F-type ATPases consist of two structural domains, F(1) containing the extramembraneous catalytic core and F(0) containing the membrane proton channel, linked together by a central stalk and a peripheral stalk. During catalysis, ATP synthesis in the catalytic domain of F(1) is coupled via a rotary mechanism of the central stalk subunits to proton translocation. Component of the F(0) channel, it forms part of the peripheral stalk, linking F(1) to F(0). This Streptococcus mutans serotype c (strain ATCC 700610 / UA159) protein is ATP synthase subunit b.